Reading from the N-terminus, the 238-residue chain is Probable transcriptional regulatory protein SAB0618 (238 aa).

This sequence belongs to the TACO1 family. YeeN subfamily.

Its subcellular location is the cytoplasm. The polypeptide is Probable transcriptional regulatory protein SAB0618 (Staphylococcus aureus (strain bovine RF122 / ET3-1)).